The sequence spans 367 residues: MSSQPFWDERIHRWRCLGSEGNELIYIDEEQTWKDYDPNSLKMNKAGSTGAEVSDVTAEATEGKESSNGEDRHTKRLYESTSAEGYPSGSRNKKSKSENSEASPAPVINKAVYIQGLPLDVTVDEIEEVFKKCGVIAKNIDNGTPRIKIYRTEDGTPKGDALIVFFRSESVELAEQLFDDTEFRYGSGQKMRVQKANIDYKKEKTVNKDVGGALKKKALRLRQQQMQQISSWDDVDEEVDDKRKKRFNKIVVLKHIFTLEELDKTPELLIDLKDDITEEAEKCGRVTNVVLYDKEPDGVVTVRFSNNEEAEACVRLMQGRYFDGRVVEASIYDGKVRFQKSGKHTLDDEEDEEKRLEKFADWLENSN.

Residues 36–104 (YDPNSLKMNK…SKSENSEASP (69 aa)) are disordered. Residues 61 to 78 (TEGKESSNGEDRHTKRLY) show a composition bias toward basic and acidic residues. 2 RRM domains span residues 112 to 193 (VYIQ…KMRV) and 268 to 329 (LLID…VVEA).

It belongs to the HTATSF1 family. In terms of assembly, interacts with the U2AF large and U2AF small subunits.

Has a role in pre-mRNA splicing. The chain is Splicing factor U2AF-associated protein 2 (uap2) from Schizosaccharomyces pombe (strain 972 / ATCC 24843) (Fission yeast).